Consider the following 228-residue polypeptide: L-ribulose-5-phosphate 4-epimerase UlaF (228 aa).

Residues 26–27 (GN), 43–44 (SG), and 72–73 (SS) contribute to the substrate site. Residues D74, H93, and H95 each coordinate Zn(2+). Catalysis depends on D118, which acts as the Proton donor/acceptor. A Zn(2+)-binding site is contributed by H167. Catalysis depends on Y225, which acts as the Proton donor/acceptor.

The protein belongs to the aldolase class II family. AraD/FucA subfamily. Requires Zn(2+) as cofactor.

The catalysed reaction is L-ribulose 5-phosphate = D-xylulose 5-phosphate. Its pathway is cofactor degradation; L-ascorbate degradation; D-xylulose 5-phosphate from L-ascorbate: step 4/4. Catalyzes the isomerization of L-ribulose 5-phosphate to D-xylulose 5-phosphate. Is involved in the anaerobic L-ascorbate utilization. This chain is L-ribulose-5-phosphate 4-epimerase UlaF, found in Salmonella choleraesuis (strain SC-B67).